We begin with the raw amino-acid sequence, 176 residues long: ATP-dependent protease subunit HslV (176 aa).

Thr-6 is an active-site residue. Na(+)-binding residues include Ser-161, Cys-164, and Thr-167.

The protein belongs to the peptidase T1B family. HslV subfamily. As to quaternary structure, a double ring-shaped homohexamer of HslV is capped on each side by a ring-shaped HslU homohexamer. The assembly of the HslU/HslV complex is dependent on binding of ATP.

It is found in the cytoplasm. It carries out the reaction ATP-dependent cleavage of peptide bonds with broad specificity.. With respect to regulation, allosterically activated by HslU binding. Functionally, protease subunit of a proteasome-like degradation complex believed to be a general protein degrading machinery. In Aquifex aeolicus (strain VF5), this protein is ATP-dependent protease subunit HslV.